The sequence spans 1013 residues: Dichlorochromopyrrolate synthase (1013 aa).

Belongs to the RebD family. In terms of assembly, homodimer. Requires heme as cofactor.

It carries out the reaction 2 3-(7-chloroindol-3-yl)-2-iminopropanoate + H2O2 = dichlorochromopyrrolate + NH4(+) + 2 H2O + H(+). The catalysed reaction is 2 2-iminio-3-(indol-3-yl)propanoate + H2O2 = chromopyrrolate + NH4(+) + 2 H2O + H(+). The enzyme catalyses 2 H2O2 = O2 + 2 H2O. Functionally, involved in the biosynthesis of the indolocarbazole antitumor agent rebeccamycin. Catalyzes the hydrogen peroxide-dependent dimerization of two L-tryptophan-derived molecules (imine form of indole 3-pyruvate (IPA)), to form dichlorochromopyrrolic acid (CPA), the precursor for the six-ring bisindolopyrrolocarbazole scaffold of the rebeccamycin. The hydrogen peroxide is provided together with iminoindolpropanoate by RebO. Due to the instability of indole 3-pyruvate (IPA), which is hydrolyzed in solution and exits in equilibrium with the predominant ketone form of IPA, the concerted functioning of the RebO/RebD system appears to prevent the buildup of significant amounts of IPA and its imine in solution, effectively shepherding the imine further down the biosynthetic chain. In Lentzea aerocolonigenes (Lechevalieria aerocolonigenes), this protein is Dichlorochromopyrrolate synthase (rebD).